Here is a 366-residue protein sequence, read N- to C-terminus: Probable quinol oxidase subunit 2 (366 aa).

The first 19 residues, 1-19 (MSKFKSLLLLFGTLILLSG), serve as a signal peptide directing secretion. A lipid anchor (N-palmitoyl cysteine) is attached at cysteine 20. Cysteine 20 is lipidated: S-diacylglycerol cysteine. A run of 2 helical transmembrane segments spans residues 38 to 58 (FLIL…LGMF) and 80 to 100 (AIIE…LAIP). Residues 330 to 366 (EPYNNEFKKDESKNAKEMKKISKDAQDQDNDDHGGGH) form a disordered region. Residues 335-366 (EFKKDESKNAKEMKKISKDAQDQDNDDHGGGH) show a composition bias toward basic and acidic residues.

This sequence belongs to the cytochrome c oxidase subunit 2 family.

The protein resides in the cell membrane. It carries out the reaction 2 a quinol + O2 = 2 a quinone + 2 H2O. Catalyzes quinol oxidation with the concomitant reduction of oxygen to water. Subunit II transfers the electrons from a quinol to the binuclear center of the catalytic subunit I. The protein is Probable quinol oxidase subunit 2 (qoxA) of Staphylococcus aureus (strain USA300).